The chain runs to 303 residues: Glucose-1-phosphate thymidylyltransferase (303 aa).

2 residues coordinate Mg(2+): Asp108 and Asp222.

The protein belongs to the glucose-1-phosphate thymidylyltransferase family. It depends on Mg(2+) as a cofactor.

The catalysed reaction is dTTP + alpha-D-glucose 1-phosphate + H(+) = dTDP-alpha-D-glucose + diphosphate. In terms of biological role, catalyzes the formation of dTDP-glucose, from dTTP and glucose 1-phosphate, as well as its pyrophosphorolysis. Probably involved in the biosynthesis of the acarviose moiety of the alpha-glucosidase inhibitor acarbose. This chain is Glucose-1-phosphate thymidylyltransferase (acbA), found in Actinoplanes sp. (strain ATCC 31044 / CBS 674.73 / SE50/110).